The primary structure comprises 203 residues: MIGRLNGILVEKHAPEIVLDVGGVGYELQVPMTSFYELPELEQSATLYTHFVVREDAQLLYGFITKQERALFRLLIKTNGVGPKLALTILSGMTAGEFVSCVERDDIVTLVKLPGVGKKTAERLVVEMRDKLKSLLEASVGNEREFMLQTNYTAPAANAEEDAISALVSLGYKPPQASRAVSKAYKEGMDTETLIKLALKSML.

Residues 1–64 (MIGRLNGILV…EDAQLLYGFI (64 aa)) form a domain I region. Positions 65-143 (TKQERALFRL…SLLEASVGNE (79 aa)) are domain II. The flexible linker stretch occupies residues 144–154 (REFMLQTNYTA). The interval 155-203 (PAANAEEDAISALVSLGYKPPQASRAVSKAYKEGMDTETLIKLALKSML) is domain III.

Belongs to the RuvA family. In terms of assembly, homotetramer. Forms an RuvA(8)-RuvB(12)-Holliday junction (HJ) complex. HJ DNA is sandwiched between 2 RuvA tetramers; dsDNA enters through RuvA and exits via RuvB. An RuvB hexamer assembles on each DNA strand where it exits the tetramer. Each RuvB hexamer is contacted by two RuvA subunits (via domain III) on 2 adjacent RuvB subunits; this complex drives branch migration. In the full resolvosome a probable DNA-RuvA(4)-RuvB(12)-RuvC(2) complex forms which resolves the HJ.

It localises to the cytoplasm. The RuvA-RuvB-RuvC complex processes Holliday junction (HJ) DNA during genetic recombination and DNA repair, while the RuvA-RuvB complex plays an important role in the rescue of blocked DNA replication forks via replication fork reversal (RFR). RuvA specifically binds to HJ cruciform DNA, conferring on it an open structure. The RuvB hexamer acts as an ATP-dependent pump, pulling dsDNA into and through the RuvAB complex. HJ branch migration allows RuvC to scan DNA until it finds its consensus sequence, where it cleaves and resolves the cruciform DNA. This chain is Holliday junction branch migration complex subunit RuvA, found in Shewanella denitrificans (strain OS217 / ATCC BAA-1090 / DSM 15013).